Here is a 73-residue protein sequence, read N- to C-terminus: Translation initiation factor IF-1 (73 aa).

In terms of domain architecture, S1-like spans 1–73 (MPKKDGAIEI…TRGRIVYRYK (73 aa)).

Belongs to the IF-1 family. In terms of assembly, component of the 30S ribosomal translation pre-initiation complex which assembles on the 30S ribosome in the order IF-2 and IF-3, IF-1 and N-formylmethionyl-tRNA(fMet); mRNA recruitment can occur at any time during PIC assembly.

It is found in the cytoplasm. Its function is as follows. One of the essential components for the initiation of protein synthesis. Stabilizes the binding of IF-2 and IF-3 on the 30S subunit to which N-formylmethionyl-tRNA(fMet) subsequently binds. Helps modulate mRNA selection, yielding the 30S pre-initiation complex (PIC). Upon addition of the 50S ribosomal subunit IF-1, IF-2 and IF-3 are released leaving the mature 70S translation initiation complex. This chain is Translation initiation factor IF-1, found in Salinispora arenicola (strain CNS-205).